The following is an 89-amino-acid chain: ATP synthase subunit c (89 aa).

Transmembrane regions (helical) follow at residues 3 to 23 (IILGFVALACGLIVGLGAIGA) and 53 to 73 (FILAGLIDAAFLIGVAIALMF).

This sequence belongs to the ATPase C chain family. As to quaternary structure, F-type ATPases have 2 components, F(1) - the catalytic core - and F(0) - the membrane proton channel. F(1) has five subunits: alpha(3), beta(3), gamma(1), delta(1), epsilon(1). F(0) has three main subunits: a(1), b(2) and c(10-14). The alpha and beta chains form an alternating ring which encloses part of the gamma chain. F(1) is attached to F(0) by a central stalk formed by the gamma and epsilon chains, while a peripheral stalk is formed by the delta and b chains.

It localises to the cell inner membrane. In terms of biological role, f(1)F(0) ATP synthase produces ATP from ADP in the presence of a proton or sodium gradient. F-type ATPases consist of two structural domains, F(1) containing the extramembraneous catalytic core and F(0) containing the membrane proton channel, linked together by a central stalk and a peripheral stalk. During catalysis, ATP synthesis in the catalytic domain of F(1) is coupled via a rotary mechanism of the central stalk subunits to proton translocation. Key component of the F(0) channel; it plays a direct role in translocation across the membrane. A homomeric c-ring of between 10-14 subunits forms the central stalk rotor element with the F(1) delta and epsilon subunits. This Verminephrobacter eiseniae (strain EF01-2) protein is ATP synthase subunit c.